Consider the following 490-residue polypeptide: Ribulose bisphosphate carboxylase large chain (490 aa).

Positions 127 and 177 each coordinate substrate. Lys-179 serves as the catalytic Proton acceptor. Residue Lys-181 participates in substrate binding. Mg(2+) is bound by residues Lys-205, Asp-207, and Glu-208. Position 205 is an N6-carboxylysine (Lys-205). The active-site Proton acceptor is the His-297. Substrate contacts are provided by Arg-298, His-330, and Ser-382.

It belongs to the RuBisCO large chain family. Type I subfamily. As to quaternary structure, heterohexadecamer of 8 large chains and 8 small chains. It depends on Mg(2+) as a cofactor.

It is found in the plastid. It localises to the chloroplast. It carries out the reaction 2 (2R)-3-phosphoglycerate + 2 H(+) = D-ribulose 1,5-bisphosphate + CO2 + H2O. The catalysed reaction is D-ribulose 1,5-bisphosphate + O2 = 2-phosphoglycolate + (2R)-3-phosphoglycerate + 2 H(+). RuBisCO catalyzes two reactions: the carboxylation of D-ribulose 1,5-bisphosphate, the primary event in carbon dioxide fixation, as well as the oxidative fragmentation of the pentose substrate in the photorespiration process. Both reactions occur simultaneously and in competition at the same active site. The chain is Ribulose bisphosphate carboxylase large chain from Thalassiosira nordenskioeldii (Marine diatom).